A 376-amino-acid polypeptide reads, in one-letter code: 4-hydroxy-3-methylbut-2-enyl diphosphate reductase (376 aa).

C19 is a [4Fe-4S] cluster binding site. (2E)-4-hydroxy-3-methylbut-2-enyl diphosphate is bound by residues H48 and H99. Positions 48 and 99 each coordinate dimethylallyl diphosphate. Isopentenyl diphosphate-binding residues include H48 and H99. C121 is a binding site for [4Fe-4S] cluster. H149 contributes to the (2E)-4-hydroxy-3-methylbut-2-enyl diphosphate binding site. H149 contributes to the dimethylallyl diphosphate binding site. H149 provides a ligand contact to isopentenyl diphosphate. Residue E151 is the Proton donor of the active site. Residue T208 participates in (2E)-4-hydroxy-3-methylbut-2-enyl diphosphate binding. C236 lines the [4Fe-4S] cluster pocket. Residues S264, N266, and S307 each contribute to the (2E)-4-hydroxy-3-methylbut-2-enyl diphosphate site. 3 residues coordinate dimethylallyl diphosphate: S264, N266, and S307. S264, N266, and S307 together coordinate isopentenyl diphosphate.

Belongs to the IspH family. [4Fe-4S] cluster serves as cofactor.

The catalysed reaction is isopentenyl diphosphate + 2 oxidized [2Fe-2S]-[ferredoxin] + H2O = (2E)-4-hydroxy-3-methylbut-2-enyl diphosphate + 2 reduced [2Fe-2S]-[ferredoxin] + 2 H(+). It carries out the reaction dimethylallyl diphosphate + 2 oxidized [2Fe-2S]-[ferredoxin] + H2O = (2E)-4-hydroxy-3-methylbut-2-enyl diphosphate + 2 reduced [2Fe-2S]-[ferredoxin] + 2 H(+). The protein operates within isoprenoid biosynthesis; dimethylallyl diphosphate biosynthesis; dimethylallyl diphosphate from (2E)-4-hydroxy-3-methylbutenyl diphosphate: step 1/1. Its pathway is isoprenoid biosynthesis; isopentenyl diphosphate biosynthesis via DXP pathway; isopentenyl diphosphate from 1-deoxy-D-xylulose 5-phosphate: step 6/6. Functionally, catalyzes the conversion of 1-hydroxy-2-methyl-2-(E)-butenyl 4-diphosphate (HMBPP) into a mixture of isopentenyl diphosphate (IPP) and dimethylallyl diphosphate (DMAPP). Acts in the terminal step of the DOXP/MEP pathway for isoprenoid precursor biosynthesis. In Treponema pallidum (strain Nichols), this protein is 4-hydroxy-3-methylbut-2-enyl diphosphate reductase.